A 441-amino-acid polypeptide reads, in one-letter code: Arginine biosynthesis bifunctional protein ArgJ, mitochondrial (441 aa).

Thr-177, Lys-204, Thr-215, Glu-301, Asn-436, and Ser-441 together coordinate substrate. Thr-215 functions as the Nucleophile in the catalytic mechanism.

It belongs to the ArgJ family. As to quaternary structure, heterodimer of an alpha and a beta chain. In terms of processing, the alpha and beta chains are autoproteolytically processed from a single precursor protein within the mitochondrion.

Its subcellular location is the mitochondrion matrix. It catalyses the reaction N(2)-acetyl-L-ornithine + L-glutamate = N-acetyl-L-glutamate + L-ornithine. It carries out the reaction L-glutamate + acetyl-CoA = N-acetyl-L-glutamate + CoA + H(+). The protein operates within amino-acid biosynthesis; L-arginine biosynthesis; L-ornithine and N-acetyl-L-glutamate from L-glutamate and N(2)-acetyl-L-ornithine (cyclic): step 1/1. Its pathway is amino-acid biosynthesis; L-arginine biosynthesis; N(2)-acetyl-L-ornithine from L-glutamate: step 1/4. Its function is as follows. Catalyzes two activities which are involved in the cyclic version of arginine biosynthesis: the synthesis of acetylglutamate from glutamate and acetyl-CoA, and of ornithine by transacetylation between acetylornithine and glutamate. The protein is Arginine biosynthesis bifunctional protein ArgJ, mitochondrial of Candida glabrata (strain ATCC 2001 / BCRC 20586 / JCM 3761 / NBRC 0622 / NRRL Y-65 / CBS 138) (Yeast).